We begin with the raw amino-acid sequence, 494 residues long: Paired box protein Pax-2-B (494 aa).

The segment at residues 15 to 141 (RHGGVNQLGG…SSINRIIRTK (127 aa)) is a DNA-binding region (paired). The segment at 18 to 74 (GVNQLGGVFVNGRPLPDVVRQRIVELAHQGVRPCDISRQLRVSHGCVSKILGRYYET) is PAI subdomain. The RED subdomain stretch occupies residues 93 to 141 (KVVDKIADYKRQNPTMFAWEIRDRLLAEGICDNDTVPSVSSINRIIRTK). Residues 142-221 (VQQPFHPTPD…GDSQSSVESL (80 aa)) are disordered. Positions 163–175 (VPSTASPPVSSAS) are enriched in low complexity.

In terms of tissue distribution, expression becomes spatially localized at mid-gastrula stages and is localized to the nervous system (midbrain, hindbrain, spinal cord), sensory organs (optic vesicle and stalk, otic vesicle), visceral arches, developing excretory system (pronephros, pronephric duct, rectal diverticulum, proctodaeum) and thryoid gland. Splicing does not appear to be tissue-specific.

It is found in the nucleus. Functionally, probable transcription factor. Involved in kidney development, acting synergistically with lhx1/lim-1 in pronephric morphogenesis during the tailbud stages. The polypeptide is Paired box protein Pax-2-B (pax2-b) (Xenopus laevis (African clawed frog)).